Reading from the N-terminus, the 463-residue chain is Metacaspase-1 (463 aa).

The tract at residues 1 to 149 is disordered; the sequence is MSWNQYPGGG…PQLQGQGGQS (149 aa). Residues 7–18 show a composition bias toward gly residues; sequence PGGGHHQQGGYG. The span at 20 to 56 shows a compositional bias: pro residues; that stretch reads RPPPPQWAQQGPPPPPNMGYRPPPPPQAYYNNPPPPQ. Residues 57–83 are compositionally biased toward low complexity; the sequence is QYQRPAPQQNGYQQGGYQQQQQSQGNY. Residues histidine 247 and cysteine 309 contribute to the active site.

It belongs to the peptidase C14B family.

Functionally, involved in cell death (apoptosis). The chain is Metacaspase-1 (MCA1) from Cryptococcus neoformans var. neoformans serotype D (strain B-3501A) (Filobasidiella neoformans).